The sequence spans 203 residues: Endo-type membrane-bound lytic murein transglycosylase A (203 aa).

Residues 1–15 form the signal peptide; it reads MKLRWFAFLIVLLAG. Residue Cys-16 is the site of N-palmitoyl cysteine attachment. Cys-16 carries S-diacylglycerol cysteine lipidation.

It belongs to the transglycosylase Slt family.

It is found in the cell outer membrane. The enzyme catalyses Endolytic cleavage of the (1-&gt;4)-beta-glycosidic linkage between N-acetylmuramic acid (MurNAc) and N-acetylglucosamine (GlcNAc) residues in peptidoglycan with concomitant formation of a 1,6-anhydrobond in the MurNAc residue.. Its function is as follows. Murein-degrading enzyme. May play a role in recycling of muropeptides during cell elongation and/or cell division. Preferentially cleaves at a distance of more than two disaccharide units from the ends of the glycan chain. The protein is Endo-type membrane-bound lytic murein transglycosylase A of Escherichia coli O127:H6 (strain E2348/69 / EPEC).